The sequence spans 189 residues: Thymidylate kinase (189 aa).

Residue 7-14 (GIDTAGKS) coordinates ATP.

It belongs to the thymidylate kinase family.

It carries out the reaction dTMP + ATP = dTDP + ADP. Phosphorylation of dTMP to form dTDP in both de novo and salvage pathways of dTTP synthesis. This chain is Thymidylate kinase, found in Aliarcobacter butzleri (strain RM4018) (Arcobacter butzleri).